We begin with the raw amino-acid sequence, 90 residues long: Probable small nuclear ribonucleoprotein F (90 aa).

Residues 7-80 enclose the Sm domain; the sequence is NPRPFLQDLV…VLYIKKADEA (74 aa).

This sequence belongs to the snRNP Sm proteins family. SmF/LSm6 subfamily.

It localises to the nucleus. It is found in the cytoplasm. In terms of biological role, plays a role in pre-mRNA splicing as a core component of the spliceosomal U1, U2, U4 and U5 small nuclear ribonucleoproteins (snRNPs), the building blocks of the spliceosome. This Neurospora crassa (strain ATCC 24698 / 74-OR23-1A / CBS 708.71 / DSM 1257 / FGSC 987) protein is Probable small nuclear ribonucleoprotein F.